A 432-amino-acid chain; its full sequence is Trigger factor (432 aa).

The PPIase FKBP-type domain maps to 161–246; that stretch reads EDRVTIDFTG…LKKVEERELP (86 aa).

Belongs to the FKBP-type PPIase family. Tig subfamily.

It is found in the cytoplasm. The catalysed reaction is [protein]-peptidylproline (omega=180) = [protein]-peptidylproline (omega=0). In terms of biological role, involved in protein export. Acts as a chaperone by maintaining the newly synthesized protein in an open conformation. Functions as a peptidyl-prolyl cis-trans isomerase. In Citrobacter koseri (strain ATCC BAA-895 / CDC 4225-83 / SGSC4696), this protein is Trigger factor.